The following is a 314-amino-acid chain: Homoserine O-succinyltransferase (314 aa).

The active-site Acyl-thioester intermediate is C142. 2 residues coordinate substrate: K163 and S192. H235 (proton acceptor) is an active-site residue. E237 is an active-site residue. R249 is a substrate binding site.

The protein belongs to the MetA family.

Its subcellular location is the cytoplasm. The catalysed reaction is L-homoserine + succinyl-CoA = O-succinyl-L-homoserine + CoA. Its pathway is amino-acid biosynthesis; L-methionine biosynthesis via de novo pathway; O-succinyl-L-homoserine from L-homoserine: step 1/1. In terms of biological role, transfers a succinyl group from succinyl-CoA to L-homoserine, forming succinyl-L-homoserine. The sequence is that of Homoserine O-succinyltransferase from Aeromonas salmonicida (strain A449).